Here is a 217-residue protein sequence, read N- to C-terminus: tRNA (guanine-N(7)-)-methyltransferase (217 aa).

S-adenosyl-L-methionine-binding residues include Glu-44, Glu-69, Asp-96, and Asp-118. Asp-118 is a catalytic residue. Residues Lys-122, Asp-154, and 191–194 (TEYE) each bind substrate.

This sequence belongs to the class I-like SAM-binding methyltransferase superfamily. TrmB family.

The enzyme catalyses guanosine(46) in tRNA + S-adenosyl-L-methionine = N(7)-methylguanosine(46) in tRNA + S-adenosyl-L-homocysteine. The protein operates within tRNA modification; N(7)-methylguanine-tRNA biosynthesis. Catalyzes the formation of N(7)-methylguanine at position 46 (m7G46) in tRNA. This chain is tRNA (guanine-N(7)-)-methyltransferase, found in Bacillus thuringiensis (strain Al Hakam).